Consider the following 318-residue polypeptide: Small ribosomal subunit biogenesis GTPase RsgA (318 aa).

The span at 1–16 (MTRGKPGRAGHDRRHA) shows a compositional bias: basic residues. The interval 1 to 21 (MTRGKPGRAGHDRRHASTGEH) is disordered. The CP-type G domain occupies 84 to 249 (SDQFKSKQLA…LIDSPGFQEF (166 aa)). Residues 133–136 (NKID) and 187–195 (GQSGMGKSS) contribute to the GTP site. Zn(2+) is bound by residues cysteine 273, cysteine 278, histidine 280, and cysteine 286.

The protein belongs to the TRAFAC class YlqF/YawG GTPase family. RsgA subfamily. Monomer. Associates with 30S ribosomal subunit, binds 16S rRNA. Zn(2+) serves as cofactor.

The protein localises to the cytoplasm. Its function is as follows. One of several proteins that assist in the late maturation steps of the functional core of the 30S ribosomal subunit. Helps release RbfA from mature subunits. May play a role in the assembly of ribosomal proteins into the subunit. Circularly permuted GTPase that catalyzes slow GTP hydrolysis, GTPase activity is stimulated by the 30S ribosomal subunit. This is Small ribosomal subunit biogenesis GTPase RsgA from Ralstonia nicotianae (strain ATCC BAA-1114 / GMI1000) (Ralstonia solanacearum).